The chain runs to 392 residues: Dual-specificity RNA methyltransferase RlmN (392 aa).

The active-site Proton acceptor is E115. The Radical SAM core domain maps to 121-358 (EVDRGTLCIS…YKAGYASPIR (238 aa)). The cysteines at positions 128 and 369 are disulfide-linked. [4Fe-4S] cluster-binding residues include C135, C139, and C142. S-adenosyl-L-methionine-binding positions include 195–196 (GE), S227, 249–251 (SFH), and N326. C369 (S-methylcysteine intermediate) is an active-site residue.

It belongs to the radical SAM superfamily. RlmN family. [4Fe-4S] cluster is required as a cofactor.

The protein localises to the cytoplasm. The catalysed reaction is adenosine(2503) in 23S rRNA + 2 reduced [2Fe-2S]-[ferredoxin] + 2 S-adenosyl-L-methionine = 2-methyladenosine(2503) in 23S rRNA + 5'-deoxyadenosine + L-methionine + 2 oxidized [2Fe-2S]-[ferredoxin] + S-adenosyl-L-homocysteine. The enzyme catalyses adenosine(37) in tRNA + 2 reduced [2Fe-2S]-[ferredoxin] + 2 S-adenosyl-L-methionine = 2-methyladenosine(37) in tRNA + 5'-deoxyadenosine + L-methionine + 2 oxidized [2Fe-2S]-[ferredoxin] + S-adenosyl-L-homocysteine. Functionally, specifically methylates position 2 of adenine 2503 in 23S rRNA and position 2 of adenine 37 in tRNAs. m2A2503 modification seems to play a crucial role in the proofreading step occurring at the peptidyl transferase center and thus would serve to optimize ribosomal fidelity. This chain is Dual-specificity RNA methyltransferase RlmN, found in Jannaschia sp. (strain CCS1).